Here is a 146-residue protein sequence, read N- to C-terminus: Prefoldin subunit alpha 1 (146 aa).

The protein belongs to the prefoldin subunit alpha family. As to quaternary structure, heterohexamer of two alpha and four beta subunits.

Its subcellular location is the cytoplasm. In terms of biological role, molecular chaperone capable of stabilizing a range of proteins. Seems to fulfill an ATP-independent, HSP70-like function in archaeal de novo protein folding. This is Prefoldin subunit alpha 1 from Thermococcus kodakarensis (strain ATCC BAA-918 / JCM 12380 / KOD1) (Pyrococcus kodakaraensis (strain KOD1)).